Here is a 229-residue protein sequence, read N- to C-terminus: Translin (229 aa).

The DNA/RNA binding stretch occupies residues 86–90 (RFHEH). The segment at 177–198 (LDSGFRLLNLKNDSLRKRYDGL) is leucine-zipper.

Belongs to the translin family. Ring-shaped heterooctamer of six TSN and two TSNAX subunits, DNA/RNA binding occurs inside the ring.

The protein resides in the cytoplasm. The protein localises to the nucleus. Exhibits both single-stranded and double-stranded endoribonuclease activity. May act as an activator of RNA-induced silencing complex (RISC) by facilitating endonucleolytic cleavage of the siRNA passenger strand. Functionally, DNA-binding protein that specifically recognizes consensus sequences at the breakpoint junctions in chromosomal translocations, mostly involving immunoglobulin (Ig)/T-cell receptor gene segments. Seems to recognize single-stranded DNA ends generated by staggered breaks occurring at recombination hot spots. This chain is Translin (TSN), found in Gallus gallus (Chicken).